The sequence spans 372 residues: Peroxisomal biogenesis factor 3 (372 aa).

The Cytoplasmic portion of the chain corresponds to 1–15; sequence MLRSMWNFLKRHKKK. Residues 1–45 form a targeting to peroxisomes region; it reads MLRSMWNFLKRHKKKCIFLGTVLGGVYILGKYGQKKIREIQEREA. The chain crosses the membrane as a helical span at residues 16-36; it reads CIFLGTVLGGVYILGKYGQKK. The Peroxisomal portion of the chain corresponds to 37–116; sequence IREIQEREAA…LKIISFTRSI (80 aa). A helical transmembrane segment spans residues 117–140; sequence VAVYSTCMLVVLLRVQLNIIGGYI. Residues 120 to 136 form an interaction with PEX19 region; that stretch reads YSTCMLVVLLRVQLNII. The Cytoplasmic portion of the chain corresponds to 141–372; that stretch reads YLDNATVGKN…AFSTPQQLEK (232 aa).

Belongs to the peroxin-3 family. Interacts with PEX19. As to expression, identified in all tissues analyzed, with the strongest expression in liver and in testis.

The protein resides in the peroxisome membrane. In terms of biological role, involved in peroxisome biosynthesis and integrity. Assembles membrane vesicles before the matrix proteins are translocated. As a docking factor for PEX19, is necessary for the import of peroxisomal membrane proteins in the peroxisomes. The polypeptide is Peroxisomal biogenesis factor 3 (Pex3) (Mus musculus (Mouse)).